Consider the following 293-residue polypeptide: Acetylglutamate kinase (293 aa).

Substrate contacts are provided by residues 60–61 (GG), arginine 82, and asparagine 188.

Belongs to the acetylglutamate kinase family. ArgB subfamily.

The protein localises to the cytoplasm. The catalysed reaction is N-acetyl-L-glutamate + ATP = N-acetyl-L-glutamyl 5-phosphate + ADP. Its pathway is amino-acid biosynthesis; L-arginine biosynthesis; N(2)-acetyl-L-ornithine from L-glutamate: step 2/4. Its function is as follows. Catalyzes the ATP-dependent phosphorylation of N-acetyl-L-glutamate. The protein is Acetylglutamate kinase of Methanothermobacter thermautotrophicus (strain ATCC 29096 / DSM 1053 / JCM 10044 / NBRC 100330 / Delta H) (Methanobacterium thermoautotrophicum).